A 156-amino-acid polypeptide reads, in one-letter code: Tripartite terminase subunit 2 (156 aa).

Residues 1–37 form a disordered region; it reads MYESENASEHHPELEDVFSENTGDSNPSMGSSDSTRS. The span at 19 to 37 shows a compositional bias: polar residues; that stretch reads SENTGDSNPSMGSSDSTRS.

Belongs to the herpesviridae TRM2 protein family. In terms of assembly, associates with TRM1 and TRM3 to form the tripartite terminase complex.

It is found in the host nucleus. Functionally, component of the molecular motor that translocates viral genomic DNA in empty capsid during DNA packaging. Forms a tripartite terminase complex together with TRM1 and TRM3 in the host cytoplasm. Once the complex reaches the host nucleus, it interacts with the capsid portal vertex. This portal forms a ring in which genomic DNA is translocated into the capsid. This is Tripartite terminase subunit 2 from Varicella-zoster virus (strain Dumas) (HHV-3).